The following is a 291-amino-acid chain: ATP synthase gamma chain (291 aa).

The protein belongs to the ATPase gamma chain family. F-type ATPases have 2 components, CF(1) - the catalytic core - and CF(0) - the membrane proton channel. CF(1) has five subunits: alpha(3), beta(3), gamma(1), delta(1), epsilon(1). CF(0) has three main subunits: a, b and c.

The protein resides in the cell inner membrane. Produces ATP from ADP in the presence of a proton gradient across the membrane. The gamma chain is believed to be important in regulating ATPase activity and the flow of protons through the CF(0) complex. The chain is ATP synthase gamma chain from Chlorobium phaeobacteroides (strain DSM 266 / SMG 266 / 2430).